Reading from the N-terminus, the 703-residue chain is Ubiquitin-like modifier-activating enzyme ATG7 (703 aa).

An N-acetylalanine modification is found at Ala-2. The FAP motif motif lies at 15–17 (FAP). A Glycyl lysine isopeptide (Lys-Gly) (interchain with G-Cter in ubiquitin) cross-link involves residue Lys-45. Residue Cys-572 is the Glycyl thioester intermediate of the active site. The residue at position 698 (Ser-698) is a Phosphoserine.

The protein belongs to the ATG7 family. Homodimer. Interacts with ATG3; this interaction is essential for the transfer of ATG8-like proteins's thioester from ATG7 to ATG3 and plays a role in the conjugation of ATG12 to ATG5. Interacts with ATG12. Forms intermediate conjugates with GABARAPL1. Forms intermediate conjugates with ATG8-like proteins such as GABARAP, GABARAPL2 or MAP1LC3A. Interacts with EP300 acetyltransferase. Interacts with FOXO1. In terms of processing, acetylated by EP300. Post-translationally, polyubiquitinated on Lys-45 via 'Lys-63'-linked ubiquitin by TRIM32; this modification positiely regulates ATG8 and ATG12 activating enzyme activity leading to initiation of autophagy under metabolic stress. As to expression, widely expressed, especially in kidney, liver, lymph nodes and bone marrow.

The protein localises to the cytoplasm. The protein resides in the preautophagosomal structure. In terms of biological role, E1-like activating enzyme involved in the 2 ubiquitin-like systems required for cytoplasm to vacuole transport (Cvt) and autophagy. Activates ATG12 for its conjugation with ATG5 as well as the ATG8 family proteins for their conjugation with phosphatidylethanolamine. Both systems are needed for the ATG8 association to Cvt vesicles and autophagosomes membranes. Required for autophagic death induced by caspase-8 inhibition. Facilitates LC3-I lipidation with phosphatidylethanolamine to form LC3-II which is found on autophagosomal membranes. Required for mitophagy which contributes to regulate mitochondrial quantity and quality by eliminating the mitochondria to a basal level to fulfill cellular energy requirements and preventing excess ROS production. Modulates p53/TP53 activity to regulate cell cycle and survival during metabolic stress. Also plays a key role in the maintenance of axonal homeostasis, the prevention of axonal degeneration, the maintenance of hematopoietic stem cells, the formation of Paneth cell granules, as well as in adipose differentiation. Plays a role in regulating the liver clock and glucose metabolism by mediating the autophagic degradation of CRY1 (clock repressor) in a time-dependent manner. The sequence is that of Ubiquitin-like modifier-activating enzyme ATG7 from Homo sapiens (Human).